Consider the following 362-residue polypeptide: Aspartate carbamoyltransferase catalytic subunit (362 aa).

The disordered stretch occupies residues 1-22 (MPKTAMTDSTSKTSTNTASSDM). Residues 7 to 20 (TDSTSKTSTNTASS) are compositionally biased toward low complexity. Arginine 100 and threonine 101 together coordinate carbamoyl phosphate. L-aspartate is bound at residue lysine 128. Carbamoyl phosphate contacts are provided by arginine 150, histidine 180, and glutamine 183. Residues arginine 214 and arginine 269 each coordinate L-aspartate. Positions 310 and 311 each coordinate carbamoyl phosphate.

This sequence belongs to the aspartate/ornithine carbamoyltransferase superfamily. ATCase family. As to quaternary structure, heterododecamer (2C3:3R2) of six catalytic PyrB chains organized as two trimers (C3), and six regulatory PyrI chains organized as three dimers (R2).

The catalysed reaction is carbamoyl phosphate + L-aspartate = N-carbamoyl-L-aspartate + phosphate + H(+). Its pathway is pyrimidine metabolism; UMP biosynthesis via de novo pathway; (S)-dihydroorotate from bicarbonate: step 2/3. In terms of biological role, catalyzes the condensation of carbamoyl phosphate and aspartate to form carbamoyl aspartate and inorganic phosphate, the committed step in the de novo pyrimidine nucleotide biosynthesis pathway. The protein is Aspartate carbamoyltransferase catalytic subunit of Psychrobacter sp. (strain PRwf-1).